Consider the following 289-residue polypeptide: MAEQTASGYIQHHLQNLTFGHLPNGEWGFAHTAAEAKEMGFWAFHVDTLGWSVALGLIFVLIFRMAAKKATSGQPGALQNFVEVLVDFVDGSVKDSFHGRSAVIAPLALTIFVWVFLMNAVDLVPVDWIPQLAMLISGDEHIPFRAVPTTDPNATLGMALSVFALIIFYSIKVKGIGGFIGELTLHPFGSKNLFVQALLIPVNFLLEFVTLIAKPISLALRLFGNMYAGELVFILIAVMFGSGLLWLSGLGVVLQWAWAVFHILIITLQAFIFMMLTIVYLSMAHEDNH.

Helical transmembrane passes span 43-63 (AFHV…VLIF), 101-121 (SAVI…MNAV), 160-180 (LSVF…GGFI), 193-213 (LFVQ…TLIA), 232-252 (VFIL…GLGV), and 259-279 (AVFH…LTIV).

It belongs to the ATPase A chain family. As to quaternary structure, F-type ATPases have 2 components, CF(1) - the catalytic core - and CF(0) - the membrane proton channel. CF(1) has five subunits: alpha(3), beta(3), gamma(1), delta(1), epsilon(1). CF(0) has three main subunits: a(1), b(2) and c(9-12). The alpha and beta chains form an alternating ring which encloses part of the gamma chain. CF(1) is attached to CF(0) by a central stalk formed by the gamma and epsilon chains, while a peripheral stalk is formed by the delta and b chains.

The protein localises to the cell inner membrane. Key component of the proton channel; it plays a direct role in the translocation of protons across the membrane. In Pseudomonas savastanoi pv. phaseolicola (strain 1448A / Race 6) (Pseudomonas syringae pv. phaseolicola (strain 1448A / Race 6)), this protein is ATP synthase subunit a.